Consider the following 388-residue polypeptide: 4-hydroxy-3-methylbut-2-en-1-yl diphosphate synthase (flavodoxin) (388 aa).

Positions 1–22 (MTSVNLGMPAAPQPVLSPRRKT) are disordered. 4 residues coordinate [4Fe-4S] cluster: cysteine 281, cysteine 284, cysteine 316, and glutamate 323.

It belongs to the IspG family. It depends on [4Fe-4S] cluster as a cofactor.

It catalyses the reaction (2E)-4-hydroxy-3-methylbut-2-enyl diphosphate + oxidized [flavodoxin] + H2O + 2 H(+) = 2-C-methyl-D-erythritol 2,4-cyclic diphosphate + reduced [flavodoxin]. It functions in the pathway isoprenoid biosynthesis; isopentenyl diphosphate biosynthesis via DXP pathway; isopentenyl diphosphate from 1-deoxy-D-xylulose 5-phosphate: step 5/6. In terms of biological role, converts 2C-methyl-D-erythritol 2,4-cyclodiphosphate (ME-2,4cPP) into 1-hydroxy-2-methyl-2-(E)-butenyl 4-diphosphate. The chain is 4-hydroxy-3-methylbut-2-en-1-yl diphosphate synthase (flavodoxin) from Kocuria rhizophila (strain ATCC 9341 / DSM 348 / NBRC 103217 / DC2201).